The primary structure comprises 330 residues: Fructose-1,6-bisphosphatase class 1 (330 aa).

The Mg(2+) site is built by Glu84, Asp103, Leu105, and Asp106. Substrate contacts are provided by residues 106-109 (DGSS), Asn196, and Lys262. Residue Glu268 participates in Mg(2+) binding.

Belongs to the FBPase class 1 family. As to quaternary structure, homotetramer. Mg(2+) is required as a cofactor.

The protein localises to the cytoplasm. It catalyses the reaction beta-D-fructose 1,6-bisphosphate + H2O = beta-D-fructose 6-phosphate + phosphate. Its pathway is carbohydrate biosynthesis; gluconeogenesis. The chain is Fructose-1,6-bisphosphatase class 1 from Shewanella sp. (strain ANA-3).